A 308-amino-acid polypeptide reads, in one-letter code: GTP cyclohydrolase MptA (308 aa).

Residues 282-308 (NDESIHQHNAHAEREVTLGQLRDELDA) form a disordered region.

Belongs to the GTP cyclohydrolase IV family. Homodimer. The cofactor is Fe(2+).

It catalyses the reaction GTP + H2O = 7,8-dihydroneopterin 2',3'-cyclic phosphate + formate + diphosphate + H(+). It participates in cofactor biosynthesis; 5,6,7,8-tetrahydromethanopterin biosynthesis. Functionally, converts GTP to 7,8-dihydro-D-neopterin 2',3'-cyclic phosphate, the first intermediate in the biosynthesis of coenzyme methanopterin. Involved in archaeosine (G(+)) and folate biosynthesis. The chain is GTP cyclohydrolase MptA from Haloferax volcanii (strain ATCC 29605 / DSM 3757 / JCM 8879 / NBRC 14742 / NCIMB 2012 / VKM B-1768 / DS2) (Halobacterium volcanii).